The sequence spans 660 residues: Arginine--tRNA ligase, cytoplasmic (660 aa).

Met1 carries the post-translational modification N-acetylmethionine. A could be involved in the assembly of the multisynthetase complex region spans residues 1–72 (MDALVAHCSA…QAERNKPTKT (72 aa)). Residues 200–202 (SPN), His211, Tyr384, Asp388, and Gln412 each bind L-arginine. The 'HIGH' region motif lies at 201 to 212 (PNIAKEMHVGHL). The interval 529–543 (NTAAYLLYAFTRIRS) is interaction with tRNA.

Belongs to the class-I aminoacyl-tRNA synthetase family. In terms of assembly, interacts (via N-terminus) with AIMP1 (via N-terminus); this stimulates its catalytic activity. Interacts (via N-terminus) with LARS2 (via C-terminus). Monomer. Part of a multisubunit complex that groups tRNA ligases for Arg (RARS1), Asp (DARS1), Gln (QARS1), Ile (IARS1), Leu (LARS1), Lys (KARS1), Met (MARS1) the bifunctional ligase for Glu and Pro (EPRS1) and the auxiliary subunits AIMP1/p43, AIMP2/p38 and EEF1E1/p18. Interacts with QARS1. Part of a complex composed of RARS1, QARS1 and AIMP1.

Its subcellular location is the cytoplasm. The protein resides in the cytosol. It carries out the reaction tRNA(Arg) + L-arginine + ATP = L-arginyl-tRNA(Arg) + AMP + diphosphate. Its function is as follows. Forms part of a macromolecular complex that catalyzes the attachment of specific amino acids to cognate tRNAs during protein synthesis. Modulates the secretion of AIMP1 and may be involved in generation of the inflammatory cytokine EMAP2 from AIMP1. In Bos taurus (Bovine), this protein is Arginine--tRNA ligase, cytoplasmic (RARS1).